The primary structure comprises 108 residues: Translation initiation factor 1A (108 aa).

Residues 11 to 85 enclose the S1-like domain; it reads SVKEVPKPAE…NKCDIIYKYS (75 aa).

The protein belongs to the eIF-1A family.

Functionally, seems to be required for maximal rate of protein biosynthesis. Enhances ribosome dissociation into subunits and stabilizes the binding of the initiator Met-tRNA(I) to 40 S ribosomal subunits. The protein is Translation initiation factor 1A (eIF1A) of Sulfurisphaera tokodaii (strain DSM 16993 / JCM 10545 / NBRC 100140 / 7) (Sulfolobus tokodaii).